An 82-amino-acid polypeptide reads, in one-letter code: Small ribosomal subunit protein bS16 (82 aa).

Belongs to the bacterial ribosomal protein bS16 family.

This Shewanella sp. (strain ANA-3) protein is Small ribosomal subunit protein bS16.